The primary structure comprises 294 residues: Enoyl-CoA hydratase domain-containing protein 3, mitochondrial (294 aa).

The N-terminal 61 residues, 1-61, are a transit peptide targeting the mitochondrion; sequence MSWLRSCGER…IILNNPQQRN (61 aa).

It belongs to the enoyl-CoA hydratase/isomerase family.

Its subcellular location is the mitochondrion. In terms of biological role, may play a role in fatty acid biosynthesis and insulin sensitivity. The sequence is that of Enoyl-CoA hydratase domain-containing protein 3, mitochondrial (echdc3) from Xenopus laevis (African clawed frog).